Reading from the N-terminus, the 148-residue chain is UPF0756 membrane protein KPN78578_11500 (148 aa).

The next 4 helical transmembrane spans lie at 14 to 34 (ALGFISHNTTVAISILVLIIV), 51 to 71 (LTVGIIILTIGVMAPIASGTL), 86 to 106 (LLAIAVGVFVSWLGGRGVSLM), and 121 to 141 (VLGVALFRGVPVGPLIAAGII).

The protein belongs to the UPF0756 family.

It is found in the cell membrane. The sequence is that of UPF0756 membrane protein KPN78578_11500 from Klebsiella pneumoniae subsp. pneumoniae (strain ATCC 700721 / MGH 78578).